A 335-amino-acid chain; its full sequence is Dye-decolorizing peroxidase (335 aa).

D149 (proton acceptor) is an active-site residue. H222 is a binding site for heme. Residues 312–335 (LPQAATPTLAAGSLSIGSLKGSPR) form a targeting peptide region.

This sequence belongs to the DyP-type peroxidase family. Homotetramer, presumably also in the encapsulin nanocompartment. Heme b serves as cofactor.

It is found in the encapsulin nanocompartment. The enzyme catalyses 2 a phenolic donor + H2O2 = 2 a phenolic radical donor + 2 H2O. Its function is as follows. Cargo of a type 1 encapsulin nanocompartment in situ; this cargo protects against oxidative stress at low pH. When expressed in the cytoplasm (absence of the encapsulin shell gene) it is almost as protective as the intact nanocompartment; its encapsulation has a modest yet significant effect on protection against oxidative stress at low pH. A heme-dependent peroxidase, it probably does not have deferrochelatase activity. Converts guaiacol and H2O2 to tetraguaiacol, also acts on 2,2'-azino-bis(3-ethylbenzothiazoline-6-sulfonic acid) (ABTS). Retains peroxidase activity when encapsulated but has a reduced set of substrates; acts on ABTS but not guaiacol. The sequence is that of Dye-decolorizing peroxidase from Mycobacterium tuberculosis (strain ATCC 25618 / H37Rv).